A 161-amino-acid chain; its full sequence is Ribosome maturation factor RimP (161 aa).

It belongs to the RimP family.

It localises to the cytoplasm. Functionally, required for maturation of 30S ribosomal subunits. The protein is Ribosome maturation factor RimP of Rickettsia felis (strain ATCC VR-1525 / URRWXCal2) (Rickettsia azadi).